The following is a 122-amino-acid chain: Large ribosomal subunit protein uL14 (122 aa).

This sequence belongs to the universal ribosomal protein uL14 family. As to quaternary structure, part of the 50S ribosomal subunit. Forms a cluster with proteins L3 and L19. In the 70S ribosome, L14 and L19 interact and together make contacts with the 16S rRNA in bridges B5 and B8.

Functionally, binds to 23S rRNA. Forms part of two intersubunit bridges in the 70S ribosome. The protein is Large ribosomal subunit protein uL14 of Psychrobacter sp. (strain PRwf-1).